The sequence spans 198 residues: ATP-dependent Clp protease proteolytic subunit (198 aa).

Ser98 acts as the Nucleophile in catalysis. Residue His123 is part of the active site.

It belongs to the peptidase S14 family. In terms of assembly, fourteen ClpP subunits assemble into 2 heptameric rings which stack back to back to give a disk-like structure with a central cavity, resembling the structure of eukaryotic proteasomes.

The protein localises to the cytoplasm. It carries out the reaction Hydrolysis of proteins to small peptides in the presence of ATP and magnesium. alpha-casein is the usual test substrate. In the absence of ATP, only oligopeptides shorter than five residues are hydrolyzed (such as succinyl-Leu-Tyr-|-NHMec, and Leu-Tyr-Leu-|-Tyr-Trp, in which cleavage of the -Tyr-|-Leu- and -Tyr-|-Trp bonds also occurs).. Cleaves peptides in various proteins in a process that requires ATP hydrolysis. Has a chymotrypsin-like activity. Plays a major role in the degradation of misfolded proteins. The protein is ATP-dependent Clp protease proteolytic subunit of Bacillus pumilus (strain SAFR-032).